A 283-amino-acid chain; its full sequence is Thymidylate synthase (283 aa).

DUMP is bound at residue Arg22. Residue Cys160 is the Nucleophile of the active site. Residues 180–183, Asn191, and 221–223 contribute to the dUMP site; these read RSCD and HIY. Position 183 (Asp183) interacts with (6R)-5,10-methylene-5,6,7,8-tetrahydrofolate. Residue Ser282 participates in (6R)-5,10-methylene-5,6,7,8-tetrahydrofolate binding.

Belongs to the thymidylate synthase family. Bacterial-type ThyA subfamily. As to quaternary structure, homodimer.

The protein localises to the cytoplasm. The enzyme catalyses dUMP + (6R)-5,10-methylene-5,6,7,8-tetrahydrofolate = 7,8-dihydrofolate + dTMP. Its pathway is pyrimidine metabolism; dTTP biosynthesis. In terms of biological role, catalyzes the reductive methylation of 2'-deoxyuridine-5'-monophosphate (dUMP) to 2'-deoxythymidine-5'-monophosphate (dTMP) while utilizing 5,10-methylenetetrahydrofolate (mTHF) as the methyl donor and reductant in the reaction, yielding dihydrofolate (DHF) as a by-product. This enzymatic reaction provides an intracellular de novo source of dTMP, an essential precursor for DNA biosynthesis. The sequence is that of Thymidylate synthase from Vibrio atlanticus (strain LGP32) (Vibrio splendidus (strain Mel32)).